The following is a 335-amino-acid chain: Ferrochelatase (335 aa).

Fe cation-binding residues include H194 and E275.

This sequence belongs to the ferrochelatase family.

The protein resides in the cytoplasm. It carries out the reaction heme b + 2 H(+) = protoporphyrin IX + Fe(2+). The protein operates within porphyrin-containing compound metabolism; protoheme biosynthesis; protoheme from protoporphyrin-IX: step 1/1. Functionally, catalyzes the ferrous insertion into protoporphyrin IX. In Sodalis glossinidius (strain morsitans), this protein is Ferrochelatase.